The following is a 194-amino-acid chain: Thioredoxin O1, mitochondrial (194 aa).

A mitochondrion-targeting transit peptide spans 1 to 42 (MKGNWSIVRKVLHRQFSTLRSSTPSSRLSTSIRPLVLAPNSI). Position 75 is a phosphoserine (S75). The 106-residue stretch at 89–194 (VKSEEEFINA…LKNLMEQLYK (106 aa)) folds into the Thioredoxin domain. Residues C118 and C121 each act as nucleophile in the active site. A disulfide bridge connects residues C118 and C121.

This sequence belongs to the thioredoxin family. Plant O-type subfamily.

The protein resides in the mitochondrion matrix. Functionally, thiol-disulfide oxidoreductase that may participate in various redox reactions. Possesses insulin disulfide bonds reducing activity. Reduced by thioredoxin reductases NTRA and NTRB. The protein is Thioredoxin O1, mitochondrial of Arabidopsis thaliana (Mouse-ear cress).